The chain runs to 323 residues: Thymidylate synthase (323 aa).

DUMP-binding positions include arginine 21 and 172–173 (RR). Residue cysteine 192 is the Nucleophile of the active site. DUMP is bound by residues 214-217 (RSND), asparagine 225, and 255-257 (HVY). Aspartate 217 contributes to the (6R)-5,10-methylene-5,6,7,8-tetrahydrofolate binding site. Residue alanine 322 coordinates (6R)-5,10-methylene-5,6,7,8-tetrahydrofolate.

The protein belongs to the thymidylate synthase family. Bacterial-type ThyA subfamily. Homodimer.

The protein localises to the cytoplasm. The catalysed reaction is dUMP + (6R)-5,10-methylene-5,6,7,8-tetrahydrofolate = 7,8-dihydrofolate + dTMP. The protein operates within pyrimidine metabolism; dTTP biosynthesis. In terms of biological role, catalyzes the reductive methylation of 2'-deoxyuridine-5'-monophosphate (dUMP) to 2'-deoxythymidine-5'-monophosphate (dTMP) while utilizing 5,10-methylenetetrahydrofolate (mTHF) as the methyl donor and reductant in the reaction, yielding dihydrofolate (DHF) as a by-product. This enzymatic reaction provides an intracellular de novo source of dTMP, an essential precursor for DNA biosynthesis. The chain is Thymidylate synthase from Pseudomonas putida (strain ATCC 47054 / DSM 6125 / CFBP 8728 / NCIMB 11950 / KT2440).